Here is a 146-residue protein sequence, read N- to C-terminus: Transcription antitermination protein NusB (146 aa).

This sequence belongs to the NusB family.

Functionally, involved in transcription antitermination. Required for transcription of ribosomal RNA (rRNA) genes. Binds specifically to the boxA antiterminator sequence of the ribosomal RNA (rrn) operons. In Herpetosiphon aurantiacus (strain ATCC 23779 / DSM 785 / 114-95), this protein is Transcription antitermination protein NusB.